The sequence spans 120 residues: NAD(P)H-quinone oxidoreductase subunit 3, chloroplastic (120 aa).

The next 3 helical transmembrane spans lie at 9–29, 64–84, and 88–108; these read IFWA…LISG, MFAL…PWAM, and VLGV…IVGS.

This sequence belongs to the complex I subunit 3 family. NDH is composed of at least 16 different subunits, 5 of which are encoded in the nucleus.

It localises to the plastid. The protein localises to the chloroplast thylakoid membrane. The catalysed reaction is a plastoquinone + NADH + (n+1) H(+)(in) = a plastoquinol + NAD(+) + n H(+)(out). The enzyme catalyses a plastoquinone + NADPH + (n+1) H(+)(in) = a plastoquinol + NADP(+) + n H(+)(out). Functionally, NDH shuttles electrons from NAD(P)H:plastoquinone, via FMN and iron-sulfur (Fe-S) centers, to quinones in the photosynthetic chain and possibly in a chloroplast respiratory chain. The immediate electron acceptor for the enzyme in this species is believed to be plastoquinone. Couples the redox reaction to proton translocation, and thus conserves the redox energy in a proton gradient. The sequence is that of NAD(P)H-quinone oxidoreductase subunit 3, chloroplastic from Gossypium barbadense (Sea Island cotton).